The following is a 583-amino-acid chain: Pentatricopeptide repeat-containing protein At2g33760 (583 aa).

9 PPR repeats span residues 71 to 105, 106 to 140, 141 to 171, 172 to 206, 207 to 241, 242 to 276, 277 to 303, 309 to 339, and 345 to 379; these read DDFLFNSVIKSTSKLRLPLHCVAYYRRMLSSNVSP, SNYTFTSVIKSCADLSALRIGKGVHCHAVVSGFGL, DTYVQAALVTFYSKCGDMEGARQVFDRMPEK, SIVAWNSLVSGFEQNGLADEAIQVFYQMRESGFEP, DSATFVSLLSACAQTGAVSLGSWVHQYIISEGLDL, NVKLGTALINLYSRCGDVGKAREVFDKMKETNVAA, WTAMISAYGTHGYGQQAVELFNKMEDD, NNVTFVAVLSACAHAGLVEEGRSVYKRMTKS, and GVEHHVCMVDMLGRAGFLDEAYKFIHQLDATGKAT. Positions 383–458 are type E motif; sequence LWTAMLGACK…QVGYSVIEVE (76 aa). Positions 459–489 are type E(+) motif; sequence NKTYMFSMGDESHQETGEIYRYLETLISRCK. Residues 490-583 are type DYW motif; the sequence is EIGYAPVSEE…NGSCSCLDYW (94 aa).

The protein belongs to the PPR family. PCMP-H subfamily.

This Arabidopsis thaliana (Mouse-ear cress) protein is Pentatricopeptide repeat-containing protein At2g33760 (PCMP-H6).